Reading from the N-terminus, the 336-residue chain is D-aspartate oxidase (336 aa).

FAD-binding residues include E34, K35, T41, S42, G304, V308, and S309. Positions 334-336 (SKL) match the Microbody targeting signal motif.

It belongs to the DAMOX/DASOX family. Monomer. It depends on FAD as a cofactor.

The protein resides in the peroxisome matrix. The catalysed reaction is D-aspartate + O2 + H2O = oxaloacetate + H2O2 + NH4(+). It carries out the reaction D-glutamate + O2 + H2O = H2O2 + 2-oxoglutarate + NH4(+). In terms of biological role, selectively catalyzes the oxidative deamination of acidic amino acids. Suppresses the level of D-aspartate in the brain, an amino acid that can act as an agonist for glutamate receptors. Protects the organism from the toxicity of D-amino acids. May also function in the intestine. The polypeptide is D-aspartate oxidase (Octopus vulgaris (Common octopus)).